The primary structure comprises 543 residues: MGFRVCVIVVFLGCLLLVPEKTMAQEMKRASIVIQGARRVCETDENFVCATLDWWPHDKCNYDQCPWGYSSVINMDLTRPLLTKAIKAFKPLRIRIGGSLQDQVIYDVGNLKTPCRPFQKMNSGLFGFSKGCLHMKRWDELNSFLTATGAVVTFGLNALRGRHKLRGKAWGGAWDHINTQDFLNYTVSKGYVIDSWEFGNELSGSGVGASVSAELYGKDLIVLKDVINKVYKNSWLHKPILVAPGGFYEQQWYTKLLEISGPSVVDVVTHHIYNLGSGNDPALVKKIMDPSYLSQVSKTFKDVNQTIQEHGPWASPWVGESGGAYNSGGRHVSDTFIDSFWYLDQLGMSARHNTKVYCRQTLVGGFYGLLEKGTFVPNPDYYSALLWHRLMGKGVLAVQTDGPPQLRVYAHCSKGRAGVTLLLINLSNQSDFTVSVSNGINVVLNAESRKKKSLLDTLKRPFSWIGSKASDGYLNREEYHLTPENGVLRSKTMVLNGKSLKPTATGDIPSLEPVLRSVNSPLNVLPLSMSFIVLPNFDASACS.

Residues 1–24 (MGFRVCVIVVFLGCLLLVPEKTMA) form the signal peptide. The N-linked (GlcNAc...) asparagine glycan is linked to Asn-184. Residue Glu-201 is the Proton donor of the active site. The N-linked (GlcNAc...) asparagine glycan is linked to Asn-304. Glu-320 functions as the Nucleophile in the catalytic mechanism. N-linked (GlcNAc...) asparagine glycans are attached at residues Asn-425 and Asn-428.

It belongs to the glycosyl hydrolase 79 family.

The protein resides in the lysosome membrane. It is found in the secreted. Functionally, endoglycosidase which is a cell surface and extracellular matrix-degrading enzyme. Cleaves heparan sulfate proteoglycans (HSPGs) into heparan sulfate side chains and core proteoglycans. This Arabidopsis thaliana (Mouse-ear cress) protein is Heparanase-like protein 1.